Here is a 609-residue protein sequence, read N- to C-terminus: uncharacterized protein (609 aa).

It belongs to the NodU/CmcH family.

This is an uncharacterized protein from Methanocaldococcus jannaschii (strain ATCC 43067 / DSM 2661 / JAL-1 / JCM 10045 / NBRC 100440) (Methanococcus jannaschii).